Consider the following 367-residue polypeptide: CCN family member 4 (367 aa).

Positions 1–22 are cleaved as a signal peptide; sequence MRWLLPWTLAAVAVLRVGNILA. The IGFBP N-terminal domain maps to 45-118; the sequence is RPEFCKWPCE…RYAIGVCAQV (74 aa). 4 cysteine pairs are disulfide-bonded: Cys-49/Cys-73, Cys-53/Cys-75, Cys-55/Cys-76, and Cys-62/Cys-79. N-linked (GlcNAc...) asparagine glycosylation is present at Asn-86. Disulfide bonds link Cys-87–Cys-101 and Cys-93–Cys-115. The VWFC domain occupies 121–186; sequence VGCVLDGVRY…GQCCEQWVCD (66 aa). Residue Asn-143 is glycosylated (N-linked (GlcNAc...) asparagine). One can recognise a TSP type-1 domain in the interval 215-260; it reads NCIAYTSPWSPCSTTCGLGISTRISNVNARCWPEQESRLCNLRPCD. 5 cysteine pairs are disulfide-bonded: Cys-273-Cys-310, Cys-290-Cys-324, Cys-301-Cys-340, Cys-304-Cys-342, and Cys-309-Cys-346. Positions 273–347 constitute a CTCK domain; sequence CLAVYQPEEA…NACFCNLSCR (75 aa). An N-linked (GlcNAc...) asparagine glycan is attached at Asn-284. Asn-343 carries N-linked (GlcNAc...) asparagine glycosylation.

The protein belongs to the CCN family. Highly expressed in kidney and lung. Lower levels in heart, brain, spleen, liver, skeletal muscle and testis. Expressed in low metastatic melanoma cells.

Its subcellular location is the secreted. Downstream regulator in the Wnt/Frizzled-signaling pathway. Associated with cell survival. Adheres to skin and melanoma fibroblasts. In vitro binding to skin fibroblasts occurs through the proteoglycans, decorin and biglycan. Suppresses tumor growth in vivo. In Mus musculus (Mouse), this protein is CCN family member 4 (Ccn4).